Here is a 71-residue protein sequence, read N- to C-terminus: Transcription modulator YdgT (71 aa).

This sequence belongs to the Hha/YmoA/Cnu family. In terms of assembly, forms complexes with both H-NS and StpA.

Its function is as follows. Binds to H-NS and modified the range of genes it silences; H-NS alonge silences core gene while the H-NS-Hha complex (and presumably also H-NS-YdgT) silences genes acquired by horizontal gene transfer. Plays a role silencing virulence factors in the absence of factors that induce pathogenicity. The complex formed with H-NS binds to the specific 26-bp cnb site in the origin of replication oriC. The sequence is that of Transcription modulator YdgT (ydgT) from Salmonella choleraesuis (strain SC-B67).